A 596-amino-acid polypeptide reads, in one-letter code: Clathrin heavy chain linker domain-containing protein 1 (596 aa).

Positions 129 to 241 form a coiled coil; sequence QLEAKMRIIE…RDIAENLKKD (113 aa).

The sequence is that of Clathrin heavy chain linker domain-containing protein 1 (Clhc1) from Mus musculus (Mouse).